The following is a 364-amino-acid chain: Mannose-1-phosphate guanyltransferase (364 aa).

It belongs to the transferase hexapeptide repeat family.

Its subcellular location is the cytoplasm. It carries out the reaction alpha-D-mannose 1-phosphate + GTP + H(+) = GDP-alpha-D-mannose + diphosphate. It participates in nucleotide-sugar biosynthesis; GDP-alpha-D-mannose biosynthesis; GDP-alpha-D-mannose from alpha-D-mannose 1-phosphate (GTP route): step 1/1. Functionally, involved in cell wall synthesis where it is required for glycosylation. Involved in cell cycle progression through cell-size checkpoint. In Gibberella zeae (strain ATCC MYA-4620 / CBS 123657 / FGSC 9075 / NRRL 31084 / PH-1) (Wheat head blight fungus), this protein is Mannose-1-phosphate guanyltransferase (MPG1).